We begin with the raw amino-acid sequence, 231 residues long: Lipoprotein-releasing system ATP-binding protein LolD (231 aa).

The ABC transporter domain occupies 6–231 (LQVQAVSKSY…YLQAVAEHAQ (226 aa)). 42-49 (GTSGSGKS) contacts ATP.

The protein belongs to the ABC transporter superfamily. Lipoprotein translocase (TC 3.A.1.125) family. In terms of assembly, the complex is composed of two ATP-binding proteins (LolD) and two transmembrane proteins (LolC and LolE).

It is found in the cell inner membrane. In terms of biological role, part of the ABC transporter complex LolCDE involved in the translocation of mature outer membrane-directed lipoproteins, from the inner membrane to the periplasmic chaperone, LolA. Responsible for the formation of the LolA-lipoprotein complex in an ATP-dependent manner. This chain is Lipoprotein-releasing system ATP-binding protein LolD, found in Shewanella sp. (strain MR-7).